A 1149-amino-acid chain; its full sequence is MHVMNCVSLASDKENGTLATAAAFMTGQTSPSASPPPPPPPPPPPPCPHSGEGFSPSPPPPLPPPLPGGPPIPPPPPPGLPSVSYLNGYSSLGKKKRMRSFFWKTIPEEQVRGKTNIWTLAAKQQHQYQIDKKTIEELFGQQEDTSKASLPKRGGALNSSFRDAREEVTVLDAKRSMNIGIFLKQFKKSPQSIVEDIYQGKSEHYGSETLREILKLLPESEEVKKLKAFNGDVSKLSLADSFLHCLIQVPNYSLRIEAMVLKKEFLPSCSSLFKDIRTLRAATKELMLCEELHSILHLVLQAGNIMNAGGYAGNAVGFKLSSLLKLADTKANKPGMNLLHFVAQEAQKQDAILLNFSEKLQHVQETSRLSLDITEAELHSLFVRTKSLQENIQLDQELCQQMEDFLQFAVEKLAELELWKRELQGEAHTLIDFFCEDKETMKLDECFQIFRDFCTRFNKAVKDNHDREEQERKQLQRQKEMEQKRYSWSTGELGSFGRSSSENDVQMLAKTGTEDLPSFLKPRPNSPSYRPPNTRRSRLSLGISADRELLTFLESATSSPEDPNKFNSLPRSSPRQARPTIAWMEPREQQSHGPNFTHEPQASKIQEKAPPPAWQNQLPTTWREEPASPLPLAGRSRPSLRKRNSEPVGLGPTQSPPLLPLDLGVREHELVTGLTQFDLQSPKSLEEGSQLTLNDFCPTKLPSPGDRSSQPFAAGGDSLPPKDTDTQEVLSPAGEDDRTISDEPSSEALVSVVVTDTEDKDAGPLLYVSDTTDCSLTLDCSEGMDSRAGGDKQEEEKEGDGSVSSGAGEAGSSQVSSNSVSSPPGEVPAPKSSKSELSCQGGLPKDRPSRGKDAIAPKRNSFKEASVGASKPVSARRSQGVTTKPVRTLNSSENEHMRKVVPISKSSRGAGPWKRPEPTPKATPRETPSSTDTPLSRRSSVRGTSDTSPRRPQVSGSGAEEPRLPRSSGSISGRPGKDAPLQPRASFRKPSAKPLRNIPRQKPEENKVSSPNSPDPESPKEEPKAPQATGVSRALPPIPSFARNTVASSSRSLRTDAPPAARTTGLTRTVSQRQLRVKGGSEDSASKDIGTLKRASSARASKKCPESAGGSSANVETSLKGRGTTERSSLRLKDSGQATLGRILRPLQK.

Disordered stretches follow at residues 18 to 79, 464 to 540, 554 to 660, and 681 to 1149; these read LATA…PPPG, NHDR…SRLS, ESAT…PLLP, and SPKS…PLQK. 2 stretches are compositionally biased toward pro residues: residues 33–48 and 56–79; these read ASPP…PPCP and PSPP…PPPG. Residues 88 to 483 form the FH2 domain; sequence GYSSLGKKKR…QLQRQKEMEQ (396 aa). Residues 464-485 show a composition bias toward basic and acidic residues; sequence NHDREEQERKQLQRQKEMEQKR. Polar residues predominate over residues 486 to 504; it reads YSWSTGELGSFGRSSSEND. At Ser501 the chain carries Phosphoserine. Over residues 522–532 the composition is skewed to low complexity; sequence PRPNSPSYRPP. Polar residues-rich tracts occupy residues 554–575 and 591–604; these read ESAT…SSPR and SHGP…QASK. 2 positions are modified to phosphoserine: Ser645 and Ser655. A compositionally biased stretch (polar residues) spans 681–693; the sequence is SPKSLEEGSQLTL. Basic and acidic residues predominate over residues 784-795; sequence MDSRAGGDKQEE. Low complexity predominate over residues 801-822; it reads GSVSSGAGEAGSSQVSSNSVSS. Residues 844-856 show a composition bias toward basic and acidic residues; it reads PKDRPSRGKDAIA. Residues 926–947 are compositionally biased toward polar residues; the sequence is ETPSSTDTPLSRRSSVRGTSDT. The interval 960–1086 is MTBD; microtubule-binding domain; it reads EEPRLPRSSG…VKGGSEDSAS (127 aa). The segment covering 965–974 has biased composition (low complexity); sequence PRSSGSISGR. 2 stretches are compositionally biased toward polar residues: residues 1042–1052 and 1064–1074; these read ARNTVASSSRS and TGLTRTVSQRQ. Positions 1123–1134 are enriched in basic and acidic residues; sequence GTTERSSLRLKD.

Interacts with CEP170. Brain, heart and lung (at protein level).

It is found in the golgi apparatus. The protein localises to the cell projection. The protein resides in the cilium. In terms of biological role, microtubule-associated formin which regulates both actin and microtubule dynamics. Induces microtubule acetylation and stabilization and actin stress fiber formation. Regulates Golgi ribbon formation. Required for normal cilia assembly. Early in cilia assembly, may assist in the maturation and positioning of the centrosome/basal body, and once cilia assembly has initiated, may also promote cilia elongation by inhibiting disassembly. The chain is FH2 domain-containing protein 1 (Fhdc1) from Mus musculus (Mouse).